The sequence spans 146 residues: Large ribosomal subunit protein uL15 (146 aa).

Basic and acidic residues predominate over residues 1–13 (MKLHELQPAEGSR). The segment at 1 to 58 (MKLHELQPAEGSRKVRNRVGRGIGSGNGKTAGKGHKGQKARSGGGVRPGFEGGQNPLY) is disordered. Gly residues-rich tracts occupy residues 21–31 (RGIGSGNGKTA) and 42–52 (SGGGVRPGFEG).

Belongs to the universal ribosomal protein uL15 family. In terms of assembly, part of the 50S ribosomal subunit.

In terms of biological role, binds to the 23S rRNA. This Shouchella clausii (strain KSM-K16) (Alkalihalobacillus clausii) protein is Large ribosomal subunit protein uL15.